We begin with the raw amino-acid sequence, 373 residues long: Transcription factor NF-E2 45 kDa subunit (373 aa).

The segment at Met1 to Tyr83 is required for interaction with MAPK8. Residues Met1–Glu206 form a transactivation domain region. Short sequence motifs (PXY motif) lie at residues Pro61–Tyr65 and Pro79–Tyr83. The segment at Leu127–Leu150 is disordered. Ser157 carries the phosphoserine; by MAPK8 modification. The residue at position 170 (Ser170) is a Phosphoserine; by PKA. Residues Leu205–Asp226 are disordered. Residues Leu266–Leu329 enclose the bZIP domain. The segment at Arg268–Lys287 is basic motif. Positions Ile291–Leu298 are leucine-zipper. Residue Lys368 forms a Glycyl lysine isopeptide (Lys-Gly) (interchain with G-Cter in SUMO1) linkage.

The protein belongs to the bZIP family. CNC subfamily. In terms of assembly, homodimer; can bind DNA as a homodimer. Erythroid transcription activator nuclear factor erythroid-derived 2 (NF-E2), composed of a heterodimer of NFE2 and MAFK, possesses transactivation activity on beta-globin. Also forms high affinity heterodimer with MAFG; the interaction promotes erythropoiesis. Interacts (via the PXY motif 1) with ITCH (via the WW 1 domain); the interaction promotes 'Lys63'-linked ubiquitination of NFE2, translocates it to the cytoplasm and inhibits its transactivation activity. Interacts with KMT2D/MLL2; the interaction promotes transactivation of the beta-globin locus. Interacts with MAPK8 (phosphorylated form); the interaction leads to phosphorylation of NFE2 in undifferentiated cells. Phosphorylated on serine residues. In undifferentiated erythrocytes, phosphorylated by MAPK8 which then leads to ubiquitination and protein degradation. Post-translationally, sumoylated. Sumoylation is required for translocation to nuclear bodies PODs, anchoring to the gene loci, and transactivation of the beta-globin gene. In terms of processing, ubiquitinated mainly by 'Lys63'-linked ubiquitin. Polyubiquitination with 'Lys63'-linked ubiquitin by ITCH retains NFE2 in the cytoplasm preventing its transactivation activity. In undifferentiated erythrocyte, ubiquitinated after MAPK8-mediatd phosphorylation leading to protein degradation. As to expression, expressed in hematopoietic cells and also in colon and testis.

It is found in the nucleus. Its subcellular location is the PML body. The protein localises to the cytoplasm. In terms of biological role, component of the NF-E2 complex essential for regulating erythroid and megakaryocytic maturation and differentiation. Binds to the hypersensitive site 2 (HS2) of the beta-globin control region (LCR). This subunit (NFE2) recognizes the TCAT/C sequence of the AP-1-like core palindrome present in a number of erythroid and megakaryocytic gene promoters. Requires MAFK or other small MAF proteins for binding to the NF-E2 motif. May play a role in all aspects of hemoglobin production from globin and heme synthesis to procurement of iron. The protein is Transcription factor NF-E2 45 kDa subunit (NFE2) of Homo sapiens (Human).